Here is a 413-residue protein sequence, read N- to C-terminus: uncharacterized protein (413 aa).

Belongs to the mimivirus L17x/L18x family.

This is an uncharacterized protein from Acanthamoeba polyphaga (Amoeba).